The primary structure comprises 123 residues: uncharacterized protein (123 aa).

3 helical membrane-spanning segments follow: residues Val-7 to Val-29, Phe-44 to Ile-66, and Leu-79 to Ala-101.

It is found in the cell membrane. This is an uncharacterized protein from Bacillus subtilis (strain 168).